The primary structure comprises 180 residues: NADH-quinone oxidoreductase subunit I (180 aa).

4Fe-4S ferredoxin-type domains follow at residues Leu-50–Ala-80 and Glu-90–Asp-119. 8 residues coordinate [4Fe-4S] cluster: Cys-60, Cys-63, Cys-66, Cys-70, Cys-99, Cys-102, Cys-105, and Cys-109.

The protein belongs to the complex I 23 kDa subunit family. As to quaternary structure, NDH-1 is composed of 13 different subunits. Subunits NuoA, H, J, K, L, M, N constitute the membrane sector of the complex. The cofactor is [4Fe-4S] cluster.

Its subcellular location is the cell inner membrane. It carries out the reaction a quinone + NADH + 5 H(+)(in) = a quinol + NAD(+) + 4 H(+)(out). Its function is as follows. NDH-1 shuttles electrons from NADH, via FMN and iron-sulfur (Fe-S) centers, to quinones in the respiratory chain. The immediate electron acceptor for the enzyme in this species is believed to be ubiquinone. Couples the redox reaction to proton translocation (for every two electrons transferred, four hydrogen ions are translocated across the cytoplasmic membrane), and thus conserves the redox energy in a proton gradient. This chain is NADH-quinone oxidoreductase subunit I, found in Pectobacterium atrosepticum (strain SCRI 1043 / ATCC BAA-672) (Erwinia carotovora subsp. atroseptica).